The following is a 309-amino-acid chain: Probable lipid kinase YegS-like (309 aa).

Residues 1–134 (MTTPRWRLIL…IDLLRVDADG (134 aa)) form the DAGKc domain. ATP contacts are provided by residues threonine 39, 65 to 71 (GDGTLSA), and threonine 96. Mg(2+)-binding residues include leucine 219, aspartate 222, and leucine 224. Glutamate 280 (proton acceptor) is an active-site residue.

This sequence belongs to the diacylglycerol/lipid kinase family. YegS lipid kinase subfamily. The cofactor is Mg(2+). It depends on Ca(2+) as a cofactor.

The protein localises to the cytoplasm. In terms of biological role, probably phosphorylates lipids; the in vivo substrate is unknown. The protein is Probable lipid kinase YegS-like of Stenotrophomonas maltophilia (strain K279a).